We begin with the raw amino-acid sequence, 237 residues long: Orotidine 5'-phosphate decarboxylase (237 aa).

Residues Asp-10, Lys-33, 60-69, Thr-123, Arg-185, Gln-194, Gly-214, and Arg-215 contribute to the substrate site; that span reads DLKLHDIPNT. Lys-62 functions as the Proton donor in the catalytic mechanism.

This sequence belongs to the OMP decarboxylase family. Type 1 subfamily. In terms of assembly, homodimer.

The enzyme catalyses orotidine 5'-phosphate + H(+) = UMP + CO2. It participates in pyrimidine metabolism; UMP biosynthesis via de novo pathway; UMP from orotate: step 2/2. Functionally, catalyzes the decarboxylation of orotidine 5'-monophosphate (OMP) to uridine 5'-monophosphate (UMP). In Enterococcus faecalis (strain ATCC 700802 / V583), this protein is Orotidine 5'-phosphate decarboxylase.